A 295-amino-acid polypeptide reads, in one-letter code: Glutamate-binding protein GluB (295 aa).

Positions 1–26 (MSAKRTFTRIGAILGATALAGVTLTA) are cleaved as a signal peptide. C27 is lipidated: N-palmitoyl cysteine. C27 is lipidated: S-diacylglycerol cysteine.

This sequence belongs to the bacterial solute-binding protein 3 family. In terms of assembly, the complex is composed of two ATP-binding proteins (GluA), two transmembrane proteins (GluC and GluD) and a solute-binding protein (GluB).

The protein localises to the cell membrane. Its activity is regulated as follows. Binding of glutamate or asparatate induces a higher thermal stability of the protein structure. Functionally, part of the ABC transporter complex GluABCD involved in glutamate uptake. Binds glutamate with a high affinity. Also binds aspartate with high affinity, suggesting that GluB could be involved in the transport of both amino acid residues into the cell. The protein is Glutamate-binding protein GluB of Corynebacterium glutamicum (strain ATCC 13032 / DSM 20300 / JCM 1318 / BCRC 11384 / CCUG 27702 / LMG 3730 / NBRC 12168 / NCIMB 10025 / NRRL B-2784 / 534).